A 315-amino-acid chain; its full sequence is tRNA dimethylallyltransferase (315 aa).

Gly-15–Ser-22 provides a ligand contact to ATP. Thr-17–Ser-22 contacts substrate. Interaction with substrate tRNA stretches follow at residues Asp-40 to Leu-43 and Gln-162 to Arg-166.

The protein belongs to the IPP transferase family. In terms of assembly, monomer. The cofactor is Mg(2+).

The catalysed reaction is adenosine(37) in tRNA + dimethylallyl diphosphate = N(6)-dimethylallyladenosine(37) in tRNA + diphosphate. Its function is as follows. Catalyzes the transfer of a dimethylallyl group onto the adenine at position 37 in tRNAs that read codons beginning with uridine, leading to the formation of N6-(dimethylallyl)adenosine (i(6)A). The sequence is that of tRNA dimethylallyltransferase from Buchnera aphidicola subsp. Acyrthosiphon pisum (strain APS) (Acyrthosiphon pisum symbiotic bacterium).